The sequence spans 88 residues: Small ribosomal subunit protein bS18A (88 aa).

It belongs to the bacterial ribosomal protein bS18 family. As to quaternary structure, part of the 30S ribosomal subunit. Forms a tight heterodimer with protein bS6.

Functionally, binds as a heterodimer with protein bS6 to the central domain of the 16S rRNA, where it helps stabilize the platform of the 30S subunit. The chain is Small ribosomal subunit protein bS18A from Roseiflexus sp. (strain RS-1).